The chain runs to 1453 residues: NRPS-like tryptophan epimerase fscC (1453 aa).

The tract at residues 37–433 is adenylation; sequence SYGELSAMSS…ATHLIRNCVV (397 aa). One can recognise a Carrier domain in the interval 544-626; sequence TGSRQSTRHK…LFHTSKSRFT (83 aa). Ser586 carries the O-(pantetheine 4'-phosphoryl)serine modification. The segment at 639-1053 is epimerization (E) domain; it reads FPLSPVQRFF…KDVLESAGVF (415 aa). Residues 1181–1391 are condensation; sequence FFGLQSNERA…AGSSLHQHNQ (211 aa).

The protein belongs to the NRP synthetase family. Requires pantetheine 4'-phosphate as cofactor.

The protein operates within secondary metabolite biosynthesis. Its function is as follows. NRPS-like tryptophan epimerase; part of the fragmented gene cluster that mediates the biosynthesis of fusarochromene, a tryptophan-derived metabolite closely related to a group of mycotoxins including fusarochromanone. Within the pathway, fscC catalyzes the first step via epimerization of L-tryptophan to provide the intermediate D-tryptophan. D-tryptophan is subsequently hydroxylated by the tryptophan 6-hydroxylase fscE to yield 6-hydroxytryptophan. The pyrrole ring undergoes cleavaged by the tryptophan 2,3-dioxygenase fscD and is finally converted to 4-hydroxykyrunenine by the hydrolase fscH. The NRPS-like oxidoreductase fscA reduces the carboxyl group to primary alcohol and the DMATS-type prenyltransferase fscG performs prenylation, followed by the formation of a chromene ring catalyzed by the oxidoreductase fscI, which leads to desacetylfusarochromene. Epoxidation by fscF and rearrangement reactions of chromene double bonds convert compound desacetylfusarochromene to fusarochromanones. Although specific acetyltransferases were not found near the fsc gene cluster, several predicted enzymes containing the N-acetyltransferase superfamily domain are present in the genome of F.equiseti. These predicted enzymes may have the potential to convert desacetylfusarochromene to fusarochromene. The polypeptide is NRPS-like tryptophan epimerase fscC (Fusarium equiseti (Fusarium scirpi)).